A 373-amino-acid chain; its full sequence is Leucine aminopeptidase 1 (373 aa).

The N-terminal stretch at 1–18 (MKLLSVLALSATASSVLG) is a signal peptide. The propeptide occupies 19 to 75 (ASIPVDTRAEKFLIELAPGETRWVTEEEKWALKESGQDFFDITDEEVGFTAAVAQPA). Zn(2+) is bound by residues His-176 and Asp-195. A glycan (N-linked (GlcNAc...) asparagine) is linked at Asn-196. Glu-234 and Asp-261 together coordinate Zn(2+). A glycan (N-linked (GlcNAc...) asparagine) is linked at Asn-288. A disulfide bridge connects residues Cys-310 and Cys-314. Residue His-343 participates in Zn(2+) binding. The N-linked (GlcNAc...) asparagine glycan is linked to Asn-348.

It belongs to the peptidase M28 family. M28E subfamily. Monomer. It depends on Zn(2+) as a cofactor.

Its subcellular location is the secreted. Extracellular aminopeptidase that allows assimilation of proteinaceous substrates. The polypeptide is Leucine aminopeptidase 1 (LAP1) (Arthroderma gypseum (strain ATCC MYA-4604 / CBS 118893) (Microsporum gypseum)).